Reading from the N-terminus, the 209-residue chain is Ras-like protein (209 aa).

15-22 (GGGGEGKS) is a binding site for GTP. The Effector region signature appears at 37-45 (YDPTIEESY). Residues 62–66 (DTAGQ) and 121–124 (NKCD) each bind GTP. S-palmitoyl cysteine attachment occurs at residues cysteine 202 and cysteine 203. Cysteine 206 carries the post-translational modification Cysteine methyl ester. Residue cysteine 206 is the site of S-geranylgeranyl cysteine attachment. Positions 207–209 (IVM) are cleaved as a propeptide — removed in mature form.

Belongs to the small GTPase superfamily. Ras family.

The protein resides in the cell membrane. It carries out the reaction GTP + H2O = GDP + phosphate + H(+). With respect to regulation, alternates between an inactive form bound to GDP and an active form bound to GTP. Activated by a guanine nucleotide-exchange factor (GEF) and inactivated by a GTPase-activating protein (GAP). The polypeptide is Ras-like protein (Laccaria bicolor (Bicoloured deceiver)).